The chain runs to 462 residues: Argininosuccinate lyase (462 aa).

Belongs to the lyase 1 family. Argininosuccinate lyase subfamily.

It is found in the cytoplasm. It carries out the reaction 2-(N(omega)-L-arginino)succinate = fumarate + L-arginine. It functions in the pathway amino-acid biosynthesis; L-arginine biosynthesis; L-arginine from L-ornithine and carbamoyl phosphate: step 3/3. This is Argininosuccinate lyase from Bacillus cereus (strain AH820).